Here is an 86-residue protein sequence, read N- to C-terminus: Cell division topological specificity factor (86 aa).

The protein belongs to the MinE family.

Prevents the cell division inhibition by proteins MinC and MinD at internal division sites while permitting inhibition at polar sites. This ensures cell division at the proper site by restricting the formation of a division septum at the midpoint of the long axis of the cell. This chain is Cell division topological specificity factor, found in Shewanella piezotolerans (strain WP3 / JCM 13877).